Consider the following 377-residue polypeptide: Prostaglandin E synthase 2 (377 aa).

The Lumenal segment spans residues 1-57 (MDPAARVVRALWPGGCALAWRLGGRPQPLLPTQSRAGFAGAAGGPSPVAAARKGSPR). A helical transmembrane segment spans residues 58–74 (LLGAAALALGGALGLYH). Over 75–377 (TARWHLRAQD…RAITEASPAH (303 aa)) the chain is Cytoplasmic. Residues 90 to 193 (SAAQLSLSSR…EIITYYPAMK (104 aa)) enclose the Glutaredoxin domain. Ser-95 carries the post-translational modification Phosphoserine. Residues Val-148 and 164–165 (DS) each bind glutathione. The GST C-terminal domain occupies 263-377 (YIVREGKFGA…RAITEASPAH (115 aa)).

Belongs to the GST superfamily. As to quaternary structure, homodimer. May interact with CEBPB. Interacts with EXOSC10. Post-translationally, synthesized as a Golgi membrane-associated protein, and the proteolytic removal of the N-terminal hydrophobic domain leads to the formation of a mature cytosolic enzyme. Widely expressed. Expressed in the heart, including apex, inter-ventricular septum, both atria and ventricles, but not in the aorta. Also expressed in fetal heart. Detected in various regions of the brain: cerebellum; occipital, frontal and parietal lobes. Also expressed in the lymph nodes, skeletal muscle, kidney and trachea, but not in the thymus or lung. Overexpressed in colorectal cancer.

It localises to the golgi apparatus membrane. The protein localises to the cytoplasm. The protein resides in the perinuclear region. The catalysed reaction is prostaglandin H2 = prostaglandin E2. It catalyses the reaction prostaglandin H2 = (12S)-hydroxy-(5Z,8E,10E)-heptadecatrienoate + malonaldehyde. It functions in the pathway lipid metabolism; prostaglandin biosynthesis. With respect to regulation, isomerase activity is increased by sulfhydril compounds. Dithiothreitol (DTT) is most effective, followed by dihydrolipoic acid, glutathione (GSH) and 2-mercaptoethanol. Functionally, isomerase that catalyzes the conversion of PGH2 into the more stable prostaglandin E2 (PGE2) (in vitro). The biological function and the GSH-dependent property of PTGES2 is still under debate. In vivo, PTGES2 could form a complex with GSH and heme and would not participate in PGE2 synthesis but would catalyze the degradation of prostaglandin E2 H2 (PGH2) to 12(S)-hydroxy-5(Z),8(E),10(E)-heptadecatrienoic acid (HHT) and malondialdehyde (MDA). The chain is Prostaglandin E synthase 2 (PTGES2) from Homo sapiens (Human).